Here is a 313-residue protein sequence, read N- to C-terminus: Probable GTP 3',8-cyclase (313 aa).

Residues 4–224 (RFGRSIEDLR…EIRSKHYRPR (221 aa)) enclose the Radical SAM core domain. Position 13 (Arg-13) interacts with GTP. The [4Fe-4S] cluster site is built by Cys-20, Cys-24, and Cys-27. Lys-60 serves as a coordination point for GTP. Residue Gly-64 participates in S-adenosyl-L-methionine binding. GTP is bound at residue Thr-90. Ser-114 contributes to the S-adenosyl-L-methionine binding site. Lys-151 is a binding site for GTP. Positions 244 and 247 each coordinate [4Fe-4S] cluster. A GTP-binding site is contributed by 249-251 (RIR). A [4Fe-4S] cluster-binding site is contributed by Cys-261.

Belongs to the radical SAM superfamily. MoaA family. [4Fe-4S] cluster is required as a cofactor.

It catalyses the reaction GTP + AH2 + S-adenosyl-L-methionine = (8S)-3',8-cyclo-7,8-dihydroguanosine 5'-triphosphate + 5'-deoxyadenosine + L-methionine + A + H(+). Its pathway is cofactor biosynthesis; molybdopterin biosynthesis. Functionally, catalyzes the cyclization of GTP to (8S)-3',8-cyclo-7,8-dihydroguanosine 5'-triphosphate. The sequence is that of Probable GTP 3',8-cyclase from Sulfurisphaera tokodaii (strain DSM 16993 / JCM 10545 / NBRC 100140 / 7) (Sulfolobus tokodaii).